The chain runs to 158 residues: SsrA-binding protein (158 aa).

This sequence belongs to the SmpB family.

Its subcellular location is the cytoplasm. Required for rescue of stalled ribosomes mediated by trans-translation. Binds to transfer-messenger RNA (tmRNA), required for stable association of tmRNA with ribosomes. tmRNA and SmpB together mimic tRNA shape, replacing the anticodon stem-loop with SmpB. tmRNA is encoded by the ssrA gene; the 2 termini fold to resemble tRNA(Ala) and it encodes a 'tag peptide', a short internal open reading frame. During trans-translation Ala-aminoacylated tmRNA acts like a tRNA, entering the A-site of stalled ribosomes, displacing the stalled mRNA. The ribosome then switches to translate the ORF on the tmRNA; the nascent peptide is terminated with the 'tag peptide' encoded by the tmRNA and targeted for degradation. The ribosome is freed to recommence translation, which seems to be the essential function of trans-translation. This chain is SsrA-binding protein, found in Glaesserella parasuis serovar 5 (strain SH0165) (Haemophilus parasuis).